A 311-amino-acid polypeptide reads, in one-letter code: Ribonuclease HIII (311 aa).

The region spanning 95-311 is the RNase H type-2 domain; sequence MSIVGSDEVG…NTEKAFRLLK (217 aa). A divalent metal cation contacts are provided by D101, E102, and D206.

It belongs to the RNase HII family. RnhC subfamily. Mn(2+) is required as a cofactor. Requires Mg(2+) as cofactor.

It localises to the cytoplasm. The enzyme catalyses Endonucleolytic cleavage to 5'-phosphomonoester.. In terms of biological role, endonuclease that specifically degrades the RNA of RNA-DNA hybrids. The protein is Ribonuclease HIII of Bacillus cereus (strain ATCC 10987 / NRS 248).